The chain runs to 97 residues: Aspartyl/glutamyl-tRNA(Asn/Gln) amidotransferase subunit C (97 aa).

This sequence belongs to the GatC family. As to quaternary structure, heterotrimer of A, B and C subunits.

It catalyses the reaction L-glutamyl-tRNA(Gln) + L-glutamine + ATP + H2O = L-glutaminyl-tRNA(Gln) + L-glutamate + ADP + phosphate + H(+). It carries out the reaction L-aspartyl-tRNA(Asn) + L-glutamine + ATP + H2O = L-asparaginyl-tRNA(Asn) + L-glutamate + ADP + phosphate + 2 H(+). Its function is as follows. Allows the formation of correctly charged Asn-tRNA(Asn) or Gln-tRNA(Gln) through the transamidation of misacylated Asp-tRNA(Asn) or Glu-tRNA(Gln) in organisms which lack either or both of asparaginyl-tRNA or glutaminyl-tRNA synthetases. The reaction takes place in the presence of glutamine and ATP through an activated phospho-Asp-tRNA(Asn) or phospho-Glu-tRNA(Gln). The polypeptide is Aspartyl/glutamyl-tRNA(Asn/Gln) amidotransferase subunit C (Listeria welshimeri serovar 6b (strain ATCC 35897 / DSM 20650 / CCUG 15529 / CIP 8149 / NCTC 11857 / SLCC 5334 / V8)).